The chain runs to 218 residues: MSRSYYRTRIKFCGMTRAGDVRLAGELGVDAVGFIFARESSRRVAPAEARAMRQAIAPMVDVVALFRNNSKEEVREVLRTVRPTLLQFHGEEDESFCRSFNMPYLKAIAMGGREEVNARTLQLRYPSAAGFLFDSHAPGGGGGTGVAFDWGRIPTGLHRPFLLAGGLNPENVYDAVLATLPWGVDVSSGIELEPGIKDGYRMRTFVEEVRRADCTVLE.

It belongs to the TrpF family.

It catalyses the reaction N-(5-phospho-beta-D-ribosyl)anthranilate = 1-(2-carboxyphenylamino)-1-deoxy-D-ribulose 5-phosphate. The protein operates within amino-acid biosynthesis; L-tryptophan biosynthesis; L-tryptophan from chorismate: step 3/5. The sequence is that of N-(5'-phosphoribosyl)anthranilate isomerase from Stenotrophomonas maltophilia (strain K279a).